The following is a 158-amino-acid chain: Lipoprotein signal peptidase (158 aa).

The next 4 membrane-spanning stretches (helical) occupy residues L7–V27, I38–F58, W67–D87, and G95–V115. Residues D116 and D132 contribute to the active site. Residues F125–A145 traverse the membrane as a helical segment.

The protein belongs to the peptidase A8 family.

Its subcellular location is the cell inner membrane. The catalysed reaction is Release of signal peptides from bacterial membrane prolipoproteins. Hydrolyzes -Xaa-Yaa-Zaa-|-(S,diacylglyceryl)Cys-, in which Xaa is hydrophobic (preferably Leu), and Yaa (Ala or Ser) and Zaa (Gly or Ala) have small, neutral side chains.. The protein operates within protein modification; lipoprotein biosynthesis (signal peptide cleavage). Its function is as follows. This protein specifically catalyzes the removal of signal peptides from prolipoproteins. In Nostoc sp. (strain PCC 7120 / SAG 25.82 / UTEX 2576), this protein is Lipoprotein signal peptidase.